A 266-amino-acid chain; its full sequence is Putative carbamate hydrolase RutD (266 aa).

Belongs to the AB hydrolase superfamily. Hydrolase RutD family.

It carries out the reaction carbamate + 2 H(+) = NH4(+) + CO2. Functionally, involved in pyrimidine catabolism. May facilitate the hydrolysis of carbamate, a reaction that can also occur spontaneously. This Escherichia coli O111:H- (strain 11128 / EHEC) protein is Putative carbamate hydrolase RutD.